We begin with the raw amino-acid sequence, 439 residues long: Exodeoxyribonuclease 7 large subunit (439 aa).

The protein belongs to the XseA family. In terms of assembly, heterooligomer composed of large and small subunits.

It is found in the cytoplasm. The enzyme catalyses Exonucleolytic cleavage in either 5'- to 3'- or 3'- to 5'-direction to yield nucleoside 5'-phosphates.. Bidirectionally degrades single-stranded DNA into large acid-insoluble oligonucleotides, which are then degraded further into small acid-soluble oligonucleotides. The protein is Exodeoxyribonuclease 7 large subunit of Haemophilus influenzae (strain ATCC 51907 / DSM 11121 / KW20 / Rd).